A 468-amino-acid chain; its full sequence is MSNKVKPHINIVVIGHVDSGKSTSTGHMIYKCGGIDKRQIEKFEKEAQEMGKGSFKYAWVLDKLKAERERGITIDIALWKFETTKYVVTIIDAPGHRDFIKNMITGTSQADCAVLIVASSTGEFEAGISKNGQTREHALLAFTLGVKQMIVAVNKIDNTEPPYSEARFNEIKKEISAYVKKVGYDPKTVPVLPVSGWHGDNMIEPSPNMSWYKGWEVEYKDTGKHTGKTLLEALDNIPLPARPSSKPLRLPLQDVYKIGGIGTVPVGRVETGILKPGMVVTFCPANLSTEVKSVEMHHESLPEALPGDNVGFNVKNVSIKDIRRGMVASDSKNDPAIEAASFKAQVIILNHPGEIHAGYQPVLDCHTAHIACKFAELLEKIDRRSGKVIETEPKMVKSGDAAIINLIPSKGMCVESFSQYPPLGRFAVRDMRQTVAVGVIKEVDKTVAVAGKVTKSAQKAGVAAGKKK.

The region spanning 6-244 (KPHINIVVIG…DNIPLPARPS (239 aa)) is the tr-type G domain. The segment at 15-22 (GHVDSGKS) is G1. 15 to 22 (GHVDSGKS) serves as a coordination point for GTP. The segment at 71-75 (GITID) is G2. Positions 92-95 (DAPG) are G3. Residues 92–96 (DAPGH) and 154–157 (NKID) contribute to the GTP site. Residues 154–157 (NKID) form a G4 region. Residues 195–197 (SGW) are G5. 2 positions are modified to 5-glutamyl glycerylphosphorylethanolamine: Glu303 and Glu376.

Belongs to the TRAFAC class translation factor GTPase superfamily. Classic translation factor GTPase family. EF-Tu/EF-1A subfamily.

It is found in the cytoplasm. In terms of biological role, this protein promotes the GTP-dependent binding of aminoacyl-tRNA to the A-site of ribosomes during protein biosynthesis. This Hydra vulgaris (Hydra) protein is Elongation factor 1-alpha.